The sequence spans 585 residues: Glutamine--tRNA ligase (585 aa).

A 'HIGH' region motif is present at residues 51-61 (PEPNGYLHIGH). Residues 52-54 (EPN) and 58-64 (HIGHAKS) each bind ATP. L-glutamine-binding residues include D84 and Y238. Residues T257 and 292 to 293 (RL) contribute to the ATP site. A 'KMSKS' region motif is present at residues 299-303 (ITSKR).

The protein belongs to the class-I aminoacyl-tRNA synthetase family. As to quaternary structure, monomer.

It localises to the cytoplasm. The enzyme catalyses tRNA(Gln) + L-glutamine + ATP = L-glutaminyl-tRNA(Gln) + AMP + diphosphate. The sequence is that of Glutamine--tRNA ligase from Cupriavidus necator (strain ATCC 17699 / DSM 428 / KCTC 22496 / NCIMB 10442 / H16 / Stanier 337) (Ralstonia eutropha).